An 82-amino-acid chain; its full sequence is Putative membrane protein insertion efficiency factor (82 aa).

This sequence belongs to the UPF0161 family.

Its subcellular location is the cell inner membrane. Functionally, could be involved in insertion of integral membrane proteins into the membrane. This Francisella tularensis subsp. holarctica (strain LVS) protein is Putative membrane protein insertion efficiency factor.